Consider the following 330-residue polypeptide: MENSIILPIIIIAAVLIALAILFTFVPVALWISALAAGVKISIFTLIGMRLRRVVPNRVINPLIKAHKAGLNVKTNQLESHYLAGGNVDRVVNALIAAHRANIDLPFERGAAIDLAGRDVLEAVQMSVNPKVIETPFIAGIAMDGIEVKALARITVRANIDRLVGGAGEETIIARVGEGVVSTIGSSDHHKQVLENPDSISQTVLSKGLDSGTAFEILSIDIADVDIGKNIGAILQTDQAEADKNIAQAKAEERRAMAVAQEQEMVARVQEMRAKVVEAEADVPLALAEALRSGKMGVMDYMNYQNIDADTDMRDSIGKLSKENKDDDQQ.

Transmembrane regions (helical) follow at residues 5 to 25 (IILP…LFTF) and 28 to 48 (VALW…TLIG).

Belongs to the flotillin-like FloA family. As to quaternary structure, homooligomerizes.

It localises to the cell membrane. Its subcellular location is the membrane raft. Functionally, found in functional membrane microdomains (FMM) that may be equivalent to eukaryotic membrane rafts. FMMs are highly dynamic and increase in number as cells age. Flotillins are thought to be important factors in membrane fluidity. This is Flotillin-like protein FloA from Oceanobacillus iheyensis (strain DSM 14371 / CIP 107618 / JCM 11309 / KCTC 3954 / HTE831).